A 254-amino-acid chain; its full sequence is HTH-type transcriptional regulator GlvR (254 aa).

The HTH rpiR-type domain occupies 1-77 (MQLEELINQH…VFLKWEDQPE (77 aa)). The H-T-H motif DNA-binding region spans 37 to 56 (IDALAKACSVSRSSILRLAQ). The SIS domain maps to 106 to 248 (MCQLIDAADR…FRAYVDYKEA (143 aa)).

Functionally, positive regulator of the glv operon expression, which consists of GlvA, GlvR and GlvC. This is HTH-type transcriptional regulator GlvR (glvR) from Bacillus subtilis (strain 168).